A 240-amino-acid chain; its full sequence is EF-hand domain-containing protein D1 (240 aa).

The segment at 17-54 is disordered; sequence EVRAETDQGDPQPAPCDAPAGHPEPEPPARAPTASADS. EF-hand domains follow at residues 91 to 126 and 127 to 162; these read RLLKDLEKMFKTYDAGRDGFIDLMELKLMMEKLGAP and QTHLGLKSMIKEVDEDFDGKLSFREFLLIFHKAAAG. Residues D104, D108, E115, D140, D142, D144, K146, and E151 each contribute to the Ca(2+) site.

Widely expressed. Highest expression in testis, followed by ovary, kidney, cerebrum, cerebellum, heart, liver, and spleen. In the cerebrum and cerebellum, undetectable at embryonic stages, expression increases after birth up to adult stage. In adult CNS, detected in neurons of the cerebellum, cerebrum and hippocampus formation, including dentate gyrus and Cornu Ammonis, but not in the white matter. In the testis, expressed in spermatocytes, but not in spermatogonia nor in interstitial cells. In ovary, found predominantly in mural granulosa cells and those of the cumulus oophorus. In kidney, expressed in collecting ducts, but not in glomeruli. Not detected in skeletal muscle.

The protein localises to the mitochondrion inner membrane. Its function is as follows. Acts as a calcium sensor for mitochondrial flash (mitoflash) activation, an event characterized by stochastic bursts of superoxide production. May play a role in neuronal differentiation. The polypeptide is EF-hand domain-containing protein D1 (Efhd1) (Mus musculus (Mouse)).